Consider the following 217-residue polypeptide: Eukaryotic translation initiation factor 4E (217 aa).

Positions 1 to 30 (MATVEPETTPTPNPPTTEEEKTESNQEVAN) are disordered. Alanine 2 carries the N-acetylalanine modification. Threonine 22 carries the phosphothreonine modification. An EIF4EBP1/2/3 binding region spans residues 37–40 (HPLQ). 56–57 (WQ) lines the mRNA pocket. An EIF4EBP1/2/3 binding region spans residues 73–77 (WALYN). MRNA is bound at residue 102-103 (WE). Positions 132-139 (ETLLCLIG) are EIF4EBP1/2/3 binding. MRNA contacts are provided by residues 157 to 162 (RAKGDK) and 205 to 207 (TKS). Serine 209 bears the Phosphoserine; by PKC and MKNK2 mark.

It belongs to the eukaryotic initiation factor 4E family. EIF4F is a multi-subunit complex, the composition of which varies with external and internal environmental conditions. It is composed of at least EIF4A, EIF4E and EIF4G1/EIF4G3. EIF4E is also known to interact with other partners. Interacts with EIF4ENIF1/4E-T; promotes recruitment to P-bodies and import into the nucleus. Hypophosphorylated EIF4EBP1, EIF4EBP2 and EIF4EBP3 compete with EIF4G1/EIF4G3 to interact with EIF4E; insulin stimulated MAP-kinase (MAPK1 and MAPK3) phosphorylation of EIF4EBP1 causes dissociation of the complex allowing EIF4G1/EIF4G3 to bind and consequent initiation of translation. Interacts mutually exclusive with EIF4A1 or EIF4A2. Interacts with NGDN and PIWIL2. Component of the CYFIP1-EIF4E-FMR1 complex composed of CYFIP, EIF4E and FMR1. Interacts directly with CYFIP1. Interacts with CLOCK. Binds to MKNK2 in nucleus. Interacts with LIMD1, WTIP and AJUBA. Interacts with APOBEC3G in an RNA-dependent manner. Interacts with LARP1. Interacts with METTL3. Interacts with RBM24; this interaction prevents EIF4E from binding to p53/TP53 mRNA and inhibits the assembly of translation initiation complex. Interacts with DDX3X; interaction is direct and in an RNA-independent manner; this interaction enhances EIF4E cap-binding ability and is required for the repression of cap-dependent translation and the increase of IRES-mediated translation. DDX3X competes with EIF4G1 for interaction with EIF4E. Interacts with EIF4G1; which in a mutual exclusive interaction associates either with EIF1 or with EIF4E on a common binding site. Interacts with BTG4 and CNOT7. Interacts with LRPPRC (via N-terminus); the interaction promotes association of EIF4E with 4ESE-containing mRNAs. Interacts with mRNA cleavage enzyme CPSF3 and its cofactor CPSF1. Interacts (via RING-type zinc finger) with PML; the interaction results in conformational changes of both interacting proteins and reduces EIF4E affinity for the 5' m7G cap of mRNA, thus reducing EIF4E-mediated mRNA nuclear export. Interacts with homeobox protein HHEX/PRH; the interaction inhibits EIF4E-mediated mRNA nuclear export. Interacts with homeobox protein HOXA9; the interaction positively regulates EIF4E-mediated mRNA nuclear export. Interacts with homeobox protein EMX2. As to quaternary structure, (Microbial infection) Interacts with Lassa virus Z protein. In terms of assembly, (Microbial infection) Interacts with Lymphocytic choriomeningitis virus (LCMV) Z protein (via RING-type zinc finger); the interaction results in conformational changes of both interacting proteins and reduces EIF4E affinity for the m7G mRNA cap structure. (Microbial infection) Interacts (via cap-binding region) with potato virus Y VPg; this interaction mediates the translation of the VPg-viral RNA conjugates and interferes with the cellular EIF4E-dependent mRNA export and translation. In terms of processing, phosphorylation increases the ability of the protein to bind to mRNA caps and to form the eIF4F complex. Phosphorylation also enhances its mRNA transport function. Phosphorylation at Ser-209 is not essential for protein synthesis.

It localises to the cytoplasm. It is found in the P-body. Its subcellular location is the stress granule. The protein resides in the nucleus. The protein localises to the nucleus speckle. It localises to the nuclear body. Acts in the cytoplasm to initiate and regulate protein synthesis and is required in the nucleus for export of a subset of mRNAs from the nucleus to the cytoplasm which promotes processes such as RNA capping, processing and splicing. Component of the protein complex eIF4F, which is involved in the recognition of the mRNA cap, ATP-dependent unwinding of 5'-terminal secondary structure and recruitment of mRNA to the ribosome. This protein recognizes and binds the 7-methylguanosine (m7G)-containing mRNA cap during an early step in the initiation of protein synthesis and facilitates ribosome binding by inducing the unwinding of the mRNAs secondary structures. Together with EIF4G1, antagonizes the scanning promoted by EIF1-EIF4G1 and is required for TISU translation, a process where the TISU element recognition makes scanning unnecessary. In addition to its role in translation initiation, also acts as a regulator of translation and stability in the cytoplasm. Component of the CYFIP1-EIF4E-FMR1 complex which binds to the mRNA cap and mediates translational repression: in the complex, EIF4E mediates the binding to the mRNA cap. Component of a multiprotein complex that sequesters and represses translation of proneurogenic factors during neurogenesis. In P-bodies, component of a complex that mediates the storage of translationally inactive mRNAs in the cytoplasm and prevents their degradation. May play an important role in spermatogenesis through translational regulation of stage-specific mRNAs during germ cell development. As well as its roles in translation, also involved in mRNA nucleocytoplasmic transport. Its role in mRNA export from the nucleus to the cytoplasm relies on its ability to bind the m7G cap of RNAs and on the presence of the 50-nucleotide EIF4E sensitivity element (4ESE) in the 3'UTR of sensitive transcripts. Interaction with the 4ESE is mediated by LRPPRC which binds simultaneously to both EIF4E and the 4ESE, thereby acting as a platform for assembly for the RNA export complex. EIF4E-dependent mRNA export is independent of ongoing protein or RNA synthesis and is also NFX1-independent but is XPO1-dependent with LRPPRC interacting with XPO1 to form an EIF4E-dependent mRNA export complex. Alters the composition of the cytoplasmic face of the nuclear pore to promote RNA export by reducing RANBP2 expression, relocalizing nucleoporin NUP214 and increasing expression of RANBP1 and RNA export factors DDX19 and GLE1. Promotes the nuclear export of cyclin CCND1 mRNA. Promotes the nuclear export of NOS2/iNOS mRNA. Promotes the nuclear export of MDM2 mRNA. Promotes the export of additional mRNAs, including others involved in the cell cycle. In the nucleus, binds to capped splice factor-encoding mRNAs and stimulates their nuclear export to enhance splice factor production by increasing their cytoplasmic availability to the translation machinery. May also regulate splicing through interaction with the spliceosome in an RNA and m7G cap-dependent manner. Also binds to some pre-mRNAs and may play a role in their recruitment to the spliceosome. Promotes steady-state capping of a subset of coding and non-coding RNAs by mediating nuclear export of capping machinery mRNAs including RNMT, RNGTT and RAMAC to enhance their translation. Stimulates mRNA 3'-end processing by promoting the expression of several core cleavage complex factors required for mRNA cleavage and polyadenylation, and may also have a direct effect through its interaction with the CPSF3 cleavage enzyme. Rescues cells from apoptosis by promoting activation of serine/threonine-protein kinase AKT1 through mRNA export of NBS1 which potentiates AKT1 phosphorylation and also through mRNA export of AKT1 effectors, allowing for increased production of these proteins. This Homo sapiens (Human) protein is Eukaryotic translation initiation factor 4E.